A 514-amino-acid polypeptide reads, in one-letter code: Lysine--tRNA ligase (514 aa).

Over residues 1-13 the composition is skewed to low complexity; that stretch reads MSKPNNQNQQNNQ. The tract at residues 1–21 is disordered; the sequence is MSKPNNQNQQNNQEPAPEDAN. Residues E422 and E429 each contribute to the Mg(2+) site.

Belongs to the class-II aminoacyl-tRNA synthetase family. As to quaternary structure, homodimer. Mg(2+) serves as cofactor.

It localises to the cytoplasm. It catalyses the reaction tRNA(Lys) + L-lysine + ATP = L-lysyl-tRNA(Lys) + AMP + diphosphate. In Psychrobacter cryohalolentis (strain ATCC BAA-1226 / DSM 17306 / VKM B-2378 / K5), this protein is Lysine--tRNA ligase.